A 149-amino-acid polypeptide reads, in one-letter code: D-aminoacyl-tRNA deacylase (149 aa).

The short motif at 137 to 138 (GP) is the Gly-cisPro motif, important for rejection of L-amino acids element.

The protein belongs to the DTD family. Homodimer.

It localises to the cytoplasm. The enzyme catalyses glycyl-tRNA(Ala) + H2O = tRNA(Ala) + glycine + H(+). It carries out the reaction a D-aminoacyl-tRNA + H2O = a tRNA + a D-alpha-amino acid + H(+). Functionally, an aminoacyl-tRNA editing enzyme that deacylates mischarged D-aminoacyl-tRNAs. Also deacylates mischarged glycyl-tRNA(Ala), protecting cells against glycine mischarging by AlaRS. Acts via tRNA-based rather than protein-based catalysis; rejects L-amino acids rather than detecting D-amino acids in the active site. By recycling D-aminoacyl-tRNA to D-amino acids and free tRNA molecules, this enzyme counteracts the toxicity associated with the formation of D-aminoacyl-tRNA entities in vivo and helps enforce protein L-homochirality. This is D-aminoacyl-tRNA deacylase from Syntrophotalea carbinolica (strain DSM 2380 / NBRC 103641 / GraBd1) (Pelobacter carbinolicus).